We begin with the raw amino-acid sequence, 128 residues long: Ribonuclease P protein component (128 aa).

Belongs to the RnpA family. In terms of assembly, consists of a catalytic RNA component (M1 or rnpB) and a protein subunit.

The enzyme catalyses Endonucleolytic cleavage of RNA, removing 5'-extranucleotides from tRNA precursor.. RNaseP catalyzes the removal of the 5'-leader sequence from pre-tRNA to produce the mature 5'-terminus. It can also cleave other RNA substrates such as 4.5S RNA. The protein component plays an auxiliary but essential role in vivo by binding to the 5'-leader sequence and broadening the substrate specificity of the ribozyme. This Prochlorococcus marinus (strain NATL1A) protein is Ribonuclease P protein component.